The chain runs to 72 residues: Translation initiation factor IF-1 (72 aa).

The 72-residue stretch at 1–72 (MSKQTAIEQD…TKGRISFRYK (72 aa)) folds into the S1-like domain.

This sequence belongs to the IF-1 family. As to quaternary structure, component of the 30S ribosomal translation pre-initiation complex which assembles on the 30S ribosome in the order IF-2 and IF-3, IF-1 and N-formylmethionyl-tRNA(fMet); mRNA recruitment can occur at any time during PIC assembly.

It localises to the cytoplasm. One of the essential components for the initiation of protein synthesis. Stabilizes the binding of IF-2 and IF-3 on the 30S subunit to which N-formylmethionyl-tRNA(fMet) subsequently binds. Helps modulate mRNA selection, yielding the 30S pre-initiation complex (PIC). Upon addition of the 50S ribosomal subunit IF-1, IF-2 and IF-3 are released leaving the mature 70S translation initiation complex. The chain is Translation initiation factor IF-1 from Porphyromonas gingivalis (strain ATCC BAA-308 / W83).